The following is a 277-amino-acid chain: ATP synthase subunit delta (277 aa).

Belongs to the ATPase delta chain family. In terms of assembly, F-type ATPases have 2 components, F(1) - the catalytic core - and F(0) - the membrane proton channel. F(1) has five subunits: alpha(3), beta(3), gamma(1), delta(1), epsilon(1). F(0) has three main subunits: a(1), b(2) and c(10-14). The alpha and beta chains form an alternating ring which encloses part of the gamma chain. F(1) is attached to F(0) by a central stalk formed by the gamma and epsilon chains, while a peripheral stalk is formed by the delta and b chains.

It is found in the cell membrane. In terms of biological role, f(1)F(0) ATP synthase produces ATP from ADP in the presence of a proton or sodium gradient. F-type ATPases consist of two structural domains, F(1) containing the extramembraneous catalytic core and F(0) containing the membrane proton channel, linked together by a central stalk and a peripheral stalk. During catalysis, ATP synthesis in the catalytic domain of F(1) is coupled via a rotary mechanism of the central stalk subunits to proton translocation. Functionally, this protein is part of the stalk that links CF(0) to CF(1). It either transmits conformational changes from CF(0) to CF(1) or is implicated in proton conduction. This chain is ATP synthase subunit delta, found in Frankia alni (strain DSM 45986 / CECT 9034 / ACN14a).